The chain runs to 587 residues: Aspartate--tRNA(Asp/Asn) ligase (587 aa).

Glu173 serves as a coordination point for L-aspartate. Residues Gln197–Lys200 form an aspartate region. Arg219 contributes to the L-aspartate binding site. ATP contacts are provided by residues Arg219 to Glu221 and Gln228. Position 448 (His448) interacts with L-aspartate. Residue Glu481 coordinates ATP. An L-aspartate-binding site is contributed by Arg488. Gly533 to Arg536 serves as a coordination point for ATP.

This sequence belongs to the class-II aminoacyl-tRNA synthetase family. Type 1 subfamily. In terms of assembly, homodimer.

It localises to the cytoplasm. The enzyme catalyses tRNA(Asx) + L-aspartate + ATP = L-aspartyl-tRNA(Asx) + AMP + diphosphate. In terms of biological role, aspartyl-tRNA synthetase with relaxed tRNA specificity since it is able to aspartylate not only its cognate tRNA(Asp) but also tRNA(Asn). Reaction proceeds in two steps: L-aspartate is first activated by ATP to form Asp-AMP and then transferred to the acceptor end of tRNA(Asp/Asn). The sequence is that of Aspartate--tRNA(Asp/Asn) ligase from Alcanivorax borkumensis (strain ATCC 700651 / DSM 11573 / NCIMB 13689 / SK2).